The following is a 412-amino-acid chain: Glucose-1-phosphate adenylyltransferase (412 aa).

Alpha-D-glucose 1-phosphate-binding positions include Y98, G163, 178–179 (EK), and S189.

It belongs to the bacterial/plant glucose-1-phosphate adenylyltransferase family. As to quaternary structure, homotetramer.

The catalysed reaction is alpha-D-glucose 1-phosphate + ATP + H(+) = ADP-alpha-D-glucose + diphosphate. It functions in the pathway glycan biosynthesis; glycogen biosynthesis. Involved in the biosynthesis of ADP-glucose, a building block required for the elongation reactions to produce glycogen. Catalyzes the reaction between ATP and alpha-D-glucose 1-phosphate (G1P) to produce pyrophosphate and ADP-Glc. This chain is Glucose-1-phosphate adenylyltransferase, found in Thermosipho africanus (strain TCF52B).